The primary structure comprises 503 residues: MSVPPAVPLLEVRDVTKSFGNVAAVQGVSFPLYGGEAHALVGENGAGKSTIVKMLAGVHGPDTGSLLVGGEEVSLGSPSDAKARGIAVIYQEPTLFPDLTIAENIFIGTQPRARLGMIDRSAMNTAARALFDRLGVPMDPDRLASGLSIADQQLVEIAKALSTDANVIVMDEPTAALSGNEVERLFKVARSLCASGSAVMFISHRFEEIFALCQRVTVMRDGRHISTSELAGLTVDDLVRSMVGRDLGALFPKIDVEPGAVVLEIENLSRAGVFSDISFQVRAGEIVALSGLVGAGRSEVMQSAFGVDPRDSGDVRVRGKSLRKGSPKAAMRAGMALVPEDRRQQGLILDMSIERNATLTRSSALARFGFLFGGRERRSAYEWTKKLQTKYARITDPVGVLSGGNQQKVVLAKWMATAPSVLIVDEPTRGIDVGTKAEVHRIISTLASEGVAVVMISSELPEVLGMADRVLVMREGRIVSELSRSEADEEKIMFAATGSEAAA.

ABC transporter domains lie at 10-246 (LEVR…VGRD) and 256-500 (VEPG…TGSE). Residue 42-49 (GENGAGKS) participates in ATP binding.

Belongs to the ABC transporter superfamily. Ribose importer (TC 3.A.1.2.1) family. The complex is composed of an ATP-binding protein (RbsA), two transmembrane proteins (RbsC) and a solute-binding protein (RbsB).

It is found in the cell membrane. The enzyme catalyses D-ribose(out) + ATP + H2O = D-ribose(in) + ADP + phosphate + H(+). Part of the ABC transporter complex RbsABC involved in ribose import. Responsible for energy coupling to the transport system. In Rhodococcus jostii (strain RHA1), this protein is Ribose import ATP-binding protein RbsA.